Here is a 281-residue protein sequence, read N- to C-terminus: Shikimate dehydrogenase (NADP(+)) (281 aa).

Shikimate is bound by residues 20–22 (SRS) and T67. The Proton acceptor role is filled by K71. D83 contacts NADP(+). The shikimate site is built by N92 and D108. NADP(+) is bound by residues 133–137 (GAGGA), 157–162 (NRTEAR), and M225. Position 227 (Y227) interacts with shikimate. G248 provides a ligand contact to NADP(+).

This sequence belongs to the shikimate dehydrogenase family. Homodimer.

The enzyme catalyses shikimate + NADP(+) = 3-dehydroshikimate + NADPH + H(+). The protein operates within metabolic intermediate biosynthesis; chorismate biosynthesis; chorismate from D-erythrose 4-phosphate and phosphoenolpyruvate: step 4/7. Its function is as follows. Involved in the biosynthesis of the chorismate, which leads to the biosynthesis of aromatic amino acids. Catalyzes the reversible NADPH linked reduction of 3-dehydroshikimate (DHSA) to yield shikimate (SA). This is Shikimate dehydrogenase (NADP(+)) from Paracidovorax citrulli (strain AAC00-1) (Acidovorax citrulli).